The primary structure comprises 402 residues: Baeyer-Villiger oxidase notM (402 aa).

This sequence belongs to the questin oxidase family.

Baeyer-Villiger oxidase; part of the gene cluster that mediates the biosynthesis of notoamide, a fungal indole alkaloid that belongs to a family of natural products containing a characteristic bicyclo[2.2.2]diazaoctane core. The first step of notoamide biosynthesis involves coupling of L-proline and L-tryptophan by the bimodular NRPS notE, to produce cyclo-L-tryptophan-L-proline called brevianamide F. The reverse prenyltransferase notF then acts as a deoxybrevianamide E synthase and converts brevianamide F to deoxybrevianamide E via reverse prenylation at C-2 of the indole ring leading to the bicyclo[2.2.2]diazaoctane core. Deoxybrevianamide E is further hydroxylated at C-6 of the indole ring, likely catalyzed by the cytochrome P450 monooxygenase notG, to yield 6-hydroxy-deoxybrevianamide E. 6-hydroxy-deoxybrevianamide E is a specific substrate of the prenyltransferase notC for normal prenylation at C-7 to produce 6-hydroxy-7-prenyl-deoxybrevianamide, also called notoamide S. As the proposed pivotal branching point in notoamide biosynthesis, notoamide S can be diverted to notoamide E through an oxidative pyran ring closure putatively catalyzed by either notH cytochrome P450 monooxygenase or the notD FAD-linked oxidoreductase. This step would be followed by an indole 2,3-epoxidation-initiated pinacol-like rearrangement catalyzed by the notB FAD-dependent monooxygenase leading to the formation of notoamide C and notoamide D. On the other hand notoamide S is converted to notoamide T by notH (or notD), a bifunctional oxidase that also functions as the intramolecular Diels-Alderase responsible for generation of (+)-notoamide T. To generate antipodal (-)-notoaminide T, notH' (or notD') in Aspergillus versicolor is expected to catalyze a Diels-Alder reaction leading to the opposite stereochemistry. The remaining oxidoreductase notD (or notH) likely catalyzes the oxidative pyran ring formation to yield (+)-stephacidin A. The FAD-dependent monooxygenase notI is highly similar to notB and is predicted to catalyze a similar conversion from (+)-stephacidin A to (-)-notoamide B via the 2,3-epoxidation of (+)-stephacidin A followed by a pinacol-type rearrangement. Finally, it remains unclear which enzyme could be responsible for the final hydroxylation steps leading to notoamide A and sclerotiamide. The function of notM in the notoamide biosynthesis has not been determined yet. The polypeptide is Baeyer-Villiger oxidase notM (Aspergillus sp. (strain MF297-2)).